A 99-amino-acid chain; its full sequence is Aspartyl/glutamyl-tRNA(Asn/Gln) amidotransferase subunit C (99 aa).

It belongs to the GatC family. As to quaternary structure, heterotrimer of A, B and C subunits.

It carries out the reaction L-glutamyl-tRNA(Gln) + L-glutamine + ATP + H2O = L-glutaminyl-tRNA(Gln) + L-glutamate + ADP + phosphate + H(+). The catalysed reaction is L-aspartyl-tRNA(Asn) + L-glutamine + ATP + H2O = L-asparaginyl-tRNA(Asn) + L-glutamate + ADP + phosphate + 2 H(+). Its function is as follows. Allows the formation of correctly charged Asn-tRNA(Asn) or Gln-tRNA(Gln) through the transamidation of misacylated Asp-tRNA(Asn) or Glu-tRNA(Gln) in organisms which lack either or both of asparaginyl-tRNA or glutaminyl-tRNA synthetases. The reaction takes place in the presence of glutamine and ATP through an activated phospho-Asp-tRNA(Asn) or phospho-Glu-tRNA(Gln). The chain is Aspartyl/glutamyl-tRNA(Asn/Gln) amidotransferase subunit C from Corynebacterium glutamicum (strain R).